The sequence spans 403 residues: Tyrosine--tRNA ligase (403 aa).

The 'HIGH' region signature appears at 43–52 (PTAPDLHLGH). The 'KMSKS' region motif lies at 227-231 (KMSKS). Lysine 230 is an ATP binding site. The region spanning 338-399 (LPIAQLLKQT…GKRKFARVTI (62 aa)) is the S4 RNA-binding domain.

It belongs to the class-I aminoacyl-tRNA synthetase family. TyrS type 2 subfamily. Homodimer.

The protein localises to the cytoplasm. The catalysed reaction is tRNA(Tyr) + L-tyrosine + ATP = L-tyrosyl-tRNA(Tyr) + AMP + diphosphate + H(+). In terms of biological role, catalyzes the attachment of tyrosine to tRNA(Tyr) in a two-step reaction: tyrosine is first activated by ATP to form Tyr-AMP and then transferred to the acceptor end of tRNA(Tyr). The sequence is that of Tyrosine--tRNA ligase from Nitrosospira multiformis (strain ATCC 25196 / NCIMB 11849 / C 71).